Here is a 65-residue protein sequence, read N- to C-terminus: KappaPI-actitoxin-Ael3a (65 aa).

The 51-residue stretch at 5 to 55 (CLLPKKQGFCRARFPRFYYNSSTRRCEMFYYGGCGGNANNFNTLEECEKVC) folds into the BPTI/Kunitz inhibitor domain. Cystine bridges form between Cys5–Cys55, Cys14–Cys38, and Cys30–Cys51.

The protein belongs to the venom Kunitz-type family. Sea anemone type 2 potassium channel toxin subfamily.

The protein resides in the secreted. It is found in the nematocyst. Functionally, dual-function toxin that inhibits both serine proteases (trypsin Kd=124 nM) and voltage-gated potassium channels rKv1.1/KCNA1 (IC(50)=0.9 nM). The activity on the Kv1.1/KCNA1 is selective and reversible. The toxin presumably acts by blocking the channel pore in the open state. This is KappaPI-actitoxin-Ael3a from Anthopleura elegantissima (Green aggregating anemone).